Here is a 342-residue protein sequence, read N- to C-terminus: Tetraacyldisaccharide 4'-kinase (342 aa).

68 to 75 (TVGGTGKT) is an ATP binding site.

It belongs to the LpxK family.

The enzyme catalyses a lipid A disaccharide + ATP = a lipid IVA + ADP + H(+). It participates in glycolipid biosynthesis; lipid IV(A) biosynthesis; lipid IV(A) from (3R)-3-hydroxytetradecanoyl-[acyl-carrier-protein] and UDP-N-acetyl-alpha-D-glucosamine: step 6/6. Its function is as follows. Transfers the gamma-phosphate of ATP to the 4'-position of a tetraacyldisaccharide 1-phosphate intermediate (termed DS-1-P) to form tetraacyldisaccharide 1,4'-bis-phosphate (lipid IVA). The sequence is that of Tetraacyldisaccharide 4'-kinase from Burkholderia vietnamiensis (strain G4 / LMG 22486) (Burkholderia cepacia (strain R1808)).